Reading from the N-terminus, the 197-residue chain is Adenylate kinase 1 (197 aa).

19–24 (GSGKGT) provides a ligand contact to ATP. The NMP stretch occupies residues 39 to 68 (SSGDLLRAEVQSGSPKGKELKAMMERGELV). Residues S40, R45, 95–98 (GYPR), and Q102 contribute to the AMP site. The interval 132–142 (KRAETSNRVDD) is LID. Residue R133 participates in ATP binding. 2 residues coordinate AMP: R139 and R150. G178 is an ATP binding site.

The protein belongs to the adenylate kinase family. AK1 subfamily. As to quaternary structure, monomer. The cofactor is Mg(2+).

The protein resides in the cytoplasm. It catalyses the reaction AMP + ATP = 2 ADP. Its pathway is purine metabolism; purine nucleotide biosynthesis. Functionally, catalyzes the reversible transfer of the terminal phosphate group between ATP and AMP. Plays an important role in cellular energy homeostasis and in adenine nucleotide metabolism. The sequence is that of Adenylate kinase 1 from Schistosoma mansoni (Blood fluke).